A 1434-amino-acid polypeptide reads, in one-letter code: Gag-Pol polyprotein (1434 aa).

Gly2 is lipidated: N-myristoyl glycine; by host. The segment at Val7 to Leu31 is interaction with Gp41. The interval Leu8–Arg43 is interaction with host CALM1. The segment at Glu12–Ile19 is interaction with host AP3D1. Residues Asp14–His33 are interaction with membrane phosphatidylinositol 4,5-bisphosphate and RNA. Positions Trp16–Arg22 match the Nuclear export signal motif. The short motif at Lys26–Lys32 is the Nuclear localization signal element. The segment at Glu73–Ser77 is interaction with membrane phosphatidylinositol 4,5-bisphosphate. The interval Glu106–Val128 is disordered. Residues Gln116–Val128 are compositionally biased toward polar residues. Tyr132 is modified (phosphotyrosine; by host). The interaction with human PPIA/CYPA and NUP153 stretch occupies residues Asn189–Gln227. Residues Tyr277–Leu363 are dimerization/Multimerization of capsid protein p24. 2 CCHC-type zinc fingers span residues Val389–Ala406 and Lys410–Glu427. Positions Lys443–Gln480 are disordered. A compositionally biased stretch (polar residues) spans Ser449–Ser459. Residues Pro488 to Leu492 form a dimerization of protease region. In terms of domain architecture, Peptidase A2 spans Lys507–Leu576. Residue Asp512 is the For protease activity; shared with dimeric partner of the active site. 2 dimerization of protease regions span residues Gly536 to Lys542 and Asn575 to Pro587. A Reverse transcriptase domain is found at Glu630 to Leu820. Positions 696, 771, and 772 each coordinate Mg(2+). The tract at residues Phe813–His821 is RT 'primer grip'. Residues Trp984–Trp1000 carry the Tryptophan repeat motif motif. The RNase H type-1 domain occupies Ile1020–Arg1143. Asp1029, Glu1064, Asp1084, and Asp1135 together coordinate Mg(2+). Residues Asp1149–Gln1190 form an Integrase-type zinc finger. 4 residues coordinate Zn(2+): His1158, His1162, Cys1186, and Cys1189. Residues Val1200–Ile1350 form the Integrase catalytic domain. Mg(2+) contacts are provided by Asp1210, Asp1262, and Glu1298. The segment at residues Phe1369–Asp1416 is a DNA-binding region (integrase-type).

As to quaternary structure, homotrimer; further assembles as hexamers of trimers. Interacts with gp41 (via C-terminus). Interacts with host CALM1; this interaction induces a conformational change in the Matrix protein, triggering exposure of the myristate group. Interacts with host AP3D1; this interaction allows the polyprotein trafficking to multivesicular bodies during virus assembly. Part of the pre-integration complex (PIC) which is composed of viral genome, matrix protein, Vpr and integrase. Homodimer; the homodimer further multimerizes as homohexamers or homopentamers. Interacts with human PPIA/CYPA; This interaction stabilizes the capsid. Interacts with human NUP153. Interacts with host PDZD8; this interaction stabilizes the capsid. Interacts with monkey TRIM5; this interaction destabilizes the capsid. In terms of assembly, homodimer, whose active site consists of two apposed aspartic acid residues. As to quaternary structure, heterodimer of p66 RT and p51 RT (RT p66/p51). Heterodimerization of RT is essential for DNA polymerase activity. The overall folding of the subdomains is similar in p66 RT and p51 RT but the spatial arrangements of the subdomains are dramatically different. Homotetramer; may further associate as a homohexadecamer. Part of the pre-integration complex (PIC) which is composed of viral genome, matrix protein, Vpr and integrase. Interacts with human SMARCB1/INI1 and human PSIP1/LEDGF isoform 1. Interacts with human KPNA3; this interaction might play a role in nuclear import of the pre-integration complex. Interacts with human NUP153; this interaction might play a role in nuclear import of the pre-integration complex. Requires Mg(2+) as cofactor. Post-translationally, specific enzymatic cleavages by the viral protease yield mature proteins. The protease is released by autocatalytic cleavage. The polyprotein is cleaved during and after budding, this process is termed maturation. Proteolytic cleavage of p66 RT removes the RNase H domain to yield the p51 RT subunit. Nucleocapsid protein p7 might be further cleaved after virus entry. In terms of processing, tyrosine phosphorylated presumably in the virion by a host kinase. Phosphorylation is apparently not a major regulator of membrane association. Phosphorylated possibly by host MAPK1; this phosphorylation is necessary for Pin1-mediated virion uncoating. Post-translationally, methylated by host PRMT6, impairing its function by reducing RNA annealing and the initiation of reverse transcription.

It localises to the host cell membrane. Its subcellular location is the host endosome. The protein resides in the host multivesicular body. It is found in the virion membrane. The protein localises to the host nucleus. It localises to the host cytoplasm. Its subcellular location is the virion. The catalysed reaction is Specific for a P1 residue that is hydrophobic, and P1' variable, but often Pro.. It carries out the reaction Endohydrolysis of RNA in RNA/DNA hybrids. Three different cleavage modes: 1. sequence-specific internal cleavage of RNA. Human immunodeficiency virus type 1 and Moloney murine leukemia virus enzymes prefer to cleave the RNA strand one nucleotide away from the RNA-DNA junction. 2. RNA 5'-end directed cleavage 13-19 nucleotides from the RNA end. 3. DNA 3'-end directed cleavage 15-20 nucleotides away from the primer terminus.. It catalyses the reaction 3'-end directed exonucleolytic cleavage of viral RNA-DNA hybrid.. The enzyme catalyses DNA(n) + a 2'-deoxyribonucleoside 5'-triphosphate = DNA(n+1) + diphosphate. With respect to regulation, protease: The viral protease is inhibited by many synthetic protease inhibitors (PIs), such as amprenavir, atazanavir, indinavir, loprinavir, nelfinavir, ritonavir and saquinavir. Use of protease inhibitors in tritherapy regimens permit more ambitious therapeutic strategies. Reverse transcriptase/ribonuclease H: RT can be inhibited either by nucleoside RT inhibitors (NRTIs) or by non nucleoside RT inhibitors (NNRTIs). NRTIs act as chain terminators, whereas NNRTIs inhibit DNA polymerization by binding a small hydrophobic pocket near the RT active site and inducing an allosteric change in this region. Classical NRTIs are abacavir, adefovir (PMEA), didanosine (ddI), lamivudine (3TC), stavudine (d4T), tenofovir (PMPA), zalcitabine (ddC), and zidovudine (AZT). Classical NNRTIs are atevirdine (BHAP U-87201E), delavirdine, efavirenz (DMP-266), emivirine (I-EBU), and nevirapine (BI-RG-587). The tritherapies used as a basic effective treatment of AIDS associate two NRTIs and one NNRTI. Mediates, with Gag polyprotein, the essential events in virion assembly, including binding the plasma membrane, making the protein-protein interactions necessary to create spherical particles, recruiting the viral Env proteins, and packaging the genomic RNA via direct interactions with the RNA packaging sequence (Psi). Gag-Pol polyprotein may regulate its own translation, by the binding genomic RNA in the 5'-UTR. At low concentration, the polyprotein would promote translation, whereas at high concentration, the polyprotein would encapsidate genomic RNA and then shut off translation. In terms of biological role, targets the polyprotein to the plasma membrane via a multipartite membrane-binding signal, that includes its myristoylated N-terminus. Matrix protein is part of the pre-integration complex. Implicated in the release from host cell mediated by Vpu. Binds to RNA. Its function is as follows. Forms the conical core that encapsulates the genomic RNA-nucleocapsid complex in the virion. Most core are conical, with only 7% tubular. The core is constituted by capsid protein hexamer subunits. The core is disassembled soon after virion entry. Host restriction factors such as TRIM5-alpha or TRIMCyp bind retroviral capsids and cause premature capsid disassembly, leading to blocks in reverse transcription. Capsid restriction by TRIM5 is one of the factors which restricts HIV-1 to the human species. Host PIN1 apparently facilitates the virion uncoating. On the other hand, interactions with PDZD8 or CYPA stabilize the capsid. Functionally, encapsulates and protects viral dimeric unspliced genomic RNA (gRNA). Binds these RNAs through its zinc fingers. Acts as a nucleic acid chaperone which is involved in rearangement of nucleic acid secondary structure during gRNA retrotranscription. Also facilitates template switch leading to recombination. As part of the polyprotein, participates in gRNA dimerization, packaging, tRNA incorporation and virion assembly. Aspartyl protease that mediates proteolytic cleavages of Gag and Gag-Pol polyproteins during or shortly after the release of the virion from the plasma membrane. Cleavages take place as an ordered, step-wise cascade to yield mature proteins. This process is called maturation. Displays maximal activity during the budding process just prior to particle release from the cell. Also cleaves Nef and Vif, probably concomitantly with viral structural proteins on maturation of virus particles. Hydrolyzes host EIF4GI and PABP1 in order to shut off the capped cellular mRNA translation. The resulting inhibition of cellular protein synthesis serves to ensure maximal viral gene expression and to evade host immune response. Also mediates cleavage of host YTHDF3. Mediates cleavage of host CARD8, thereby activating the CARD8 inflammasome, leading to the clearance of latent HIV-1 in patient CD4(+) T-cells after viral reactivation; in contrast, HIV-1 can evade CARD8-sensing when its protease remains inactive in infected cells prior to viral budding. In terms of biological role, multifunctional enzyme that converts the viral RNA genome into dsDNA in the cytoplasm, shortly after virus entry into the cell. This enzyme displays a DNA polymerase activity that can copy either DNA or RNA templates, and a ribonuclease H (RNase H) activity that cleaves the RNA strand of RNA-DNA heteroduplexes in a partially processive 3' to 5' endonucleasic mode. Conversion of viral genomic RNA into dsDNA requires many steps. A tRNA(3)-Lys binds to the primer-binding site (PBS) situated at the 5'-end of the viral RNA. RT uses the 3' end of the tRNA primer to perform a short round of RNA-dependent minus-strand DNA synthesis. The reading proceeds through the U5 region and ends after the repeated (R) region which is present at both ends of viral RNA. The portion of the RNA-DNA heteroduplex is digested by the RNase H, resulting in a ssDNA product attached to the tRNA primer. This ssDNA/tRNA hybridizes with the identical R region situated at the 3' end of viral RNA. This template exchange, known as minus-strand DNA strong stop transfer, can be either intra- or intermolecular. RT uses the 3' end of this newly synthesized short ssDNA to perform the RNA-dependent minus-strand DNA synthesis of the whole template. RNase H digests the RNA template except for two polypurine tracts (PPTs) situated at the 5'-end and near the center of the genome. It is not clear if both polymerase and RNase H activities are simultaneous. RNase H probably can proceed both in a polymerase-dependent (RNA cut into small fragments by the same RT performing DNA synthesis) and a polymerase-independent mode (cleavage of remaining RNA fragments by free RTs). Secondly, RT performs DNA-directed plus-strand DNA synthesis using the PPTs that have not been removed by RNase H as primers. PPTs and tRNA primers are then removed by RNase H. The 3' and 5' ssDNA PBS regions hybridize to form a circular dsDNA intermediate. Strand displacement synthesis by RT to the PBS and PPT ends produces a blunt ended, linear dsDNA copy of the viral genome that includes long terminal repeats (LTRs) at both ends. Its function is as follows. Catalyzes viral DNA integration into the host chromosome, by performing a series of DNA cutting and joining reactions. This enzyme activity takes place after virion entry into a cell and reverse transcription of the RNA genome in dsDNA. The first step in the integration process is 3' processing. This step requires a complex comprising the viral genome, matrix protein, Vpr and integrase. This complex is called the pre-integration complex (PIC). The integrase protein removes 2 nucleotides from each 3' end of the viral DNA, leaving recessed CA OH's at the 3' ends. In the second step, the PIC enters cell nucleus. This process is mediated through integrase and Vpr proteins, and allows the virus to infect a non dividing cell. This ability to enter the nucleus is specific of lentiviruses, other retroviruses cannot and rely on cell division to access cell chromosomes. In the third step, termed strand transfer, the integrase protein joins the previously processed 3' ends to the 5' ends of strands of target cellular DNA at the site of integration. The 5'-ends are produced by integrase-catalyzed staggered cuts, 5 bp apart. A Y-shaped, gapped, recombination intermediate results, with the 5'-ends of the viral DNA strands and the 3' ends of target DNA strands remaining unjoined, flanking a gap of 5 bp. The last step is viral DNA integration into host chromosome. This involves host DNA repair synthesis in which the 5 bp gaps between the unjoined strands are filled in and then ligated. Since this process occurs at both cuts flanking the HIV genome, a 5 bp duplication of host DNA is produced at the ends of HIV-1 integration. Alternatively, Integrase may catalyze the excision of viral DNA just after strand transfer, this is termed disintegration. This is Gag-Pol polyprotein (gag-pol) from Homo sapiens (Human).